The primary structure comprises 153 residues: Transcriptional repressor NrdR (153 aa).

The tract at residues Met-1–Asp-20 is disordered. The segment at Cys-3–Cys-34 is a zinc-finger region. Basic and acidic residues predominate over residues Thr-11 to Asp-20. One can recognise an ATP-cone domain in the interval Ile-49–Asp-139.

Belongs to the NrdR family. It depends on Zn(2+) as a cofactor.

Its function is as follows. Negatively regulates transcription of bacterial ribonucleotide reductase nrd genes and operons by binding to NrdR-boxes. In Anaplasma phagocytophilum (strain HZ), this protein is Transcriptional repressor NrdR.